A 342-amino-acid chain; its full sequence is Terpene cyclase resF (342 aa).

5 consecutive transmembrane segments (helical) span residues 5-25, 81-101, 115-135, 151-171, and 182-202; these read VSVV…GVFA, FMAQ…TEDF, WGVF…GVCF, STWI…MLIF, and IWGV…ASLL. N-linked (GlcNAc...) asparagine glycosylation occurs at Asn224. The next 3 membrane-spanning stretches (helical) occupy residues 229-249, 269-289, and 305-325; these read YVVA…FHLG, FLQI…WHEL, and YLLL…AWAL.

It belongs to the membrane-bound ascI terpene cyclase family.

It is found in the membrane. It functions in the pathway antifungal biosynthesis. In terms of biological role, cyclase; part of the gene cluster that mediates the biosynthesis of the tetrahydropyranyl antifungal agent restricticin that acts as an inhibitor of CYP51 and blocks the ergosterol biosynthesis. The highly reducing polyketide synthase resH, the short chain dehydrogenase resG, the cyclase resF, the FAD-dependent monooxygenase resA and the enoylreductase resD are required to generate the first stable intermediate desmethylrestrictinol. ResH with resD biosynthesize the first polyketide chain intermediate that is reduced by resG, followed by epoxidation by resA before 6-endo cyclization via epoxide opening by resF leads to desmethylrestrictinol. The methyltransferase resE then catalyzes the C4 O-methylation of desmethylrestrictinol to produce restrictinol, and the nonribosomal peptide synthetase resC catalyzes the C3 esterification of restrictinol with glycine that leads to restricticin. This is Terpene cyclase resF from Aspergillus sclerotiorum.